The following is a 700-amino-acid chain: Polyribonucleotide nucleotidyltransferase (700 aa).

Residues Asp-484 and Asp-490 each coordinate Mg(2+). Residues 551-610 (PRVIRMVVDPEKIREIIGPGGKTISKIIAETGVKIDIEEDGRLYITASDLRSGERAKQMI) enclose the KH domain. Residues 620–688 (GEIYLGKVLR…KLGRISLSRK (69 aa)) enclose the S1 motif domain.

Belongs to the polyribonucleotide nucleotidyltransferase family. Mg(2+) is required as a cofactor.

It localises to the cytoplasm. It catalyses the reaction RNA(n+1) + phosphate = RNA(n) + a ribonucleoside 5'-diphosphate. Functionally, involved in mRNA degradation. Catalyzes the phosphorolysis of single-stranded polyribonucleotides processively in the 3'- to 5'-direction. In Thermoanaerobacter pseudethanolicus (strain ATCC 33223 / 39E) (Clostridium thermohydrosulfuricum), this protein is Polyribonucleotide nucleotidyltransferase.